The chain runs to 327 residues: Methionyl-tRNA formyltransferase (327 aa).

A (6S)-5,6,7,8-tetrahydrofolate-binding site is contributed by 121–124 (SLLP).

The protein belongs to the Fmt family.

The catalysed reaction is L-methionyl-tRNA(fMet) + (6R)-10-formyltetrahydrofolate = N-formyl-L-methionyl-tRNA(fMet) + (6S)-5,6,7,8-tetrahydrofolate + H(+). Its function is as follows. Attaches a formyl group to the free amino group of methionyl-tRNA(fMet). The formyl group appears to play a dual role in the initiator identity of N-formylmethionyl-tRNA by promoting its recognition by IF2 and preventing the misappropriation of this tRNA by the elongation apparatus. This chain is Methionyl-tRNA formyltransferase, found in Burkholderia ambifaria (strain MC40-6).